Here is a 193-residue protein sequence, read N- to C-terminus: Probable GTP-binding protein EngB (193 aa).

An EngB-type G domain is found at 19–188 (SVKEVCFMGR…HKQIFELFKA (170 aa)). Residues 27 to 34 (GRSNVGKS), 53 to 57 (GRTQL), 70 to 73 (DLPG), 136 to 139 (NKFD), and 167 to 169 (VSA) each bind GTP. The Mg(2+) site is built by S34 and T55.

Belongs to the TRAFAC class TrmE-Era-EngA-EngB-Septin-like GTPase superfamily. EngB GTPase family. The cofactor is Mg(2+).

Necessary for normal cell division and for the maintenance of normal septation. This is Probable GTP-binding protein EngB from Mycoplasma pneumoniae (strain ATCC 29342 / M129 / Subtype 1) (Mycoplasmoides pneumoniae).